Reading from the N-terminus, the 141-residue chain is Hemoglobin subunit alpha-1 (141 aa).

The region spanning 1–141 (VLTEDDKNHI…VAKTLVAHYR (141 aa)) is the Globin domain. H58 is a binding site for O2. H87 is a binding site for heme b.

Belongs to the globin family. Heterotetramer of two alpha chains and two beta chains. In terms of tissue distribution, red blood cells.

Functionally, involved in oxygen transport from the lung to the various peripheral tissues. This chain is Hemoglobin subunit alpha-1, found in Iguana iguana (Common iguana).